Reading from the N-terminus, the 125-residue chain is Fluoride-specific ion channel FluC (125 aa).

4 consecutive transmembrane segments (helical) span residues 3 to 23 (FILIAIGGAFGALFRYFVSKV), 33 to 53 (IPLGTVIVNVLGAFLLSFVLF), 65 to 85 (FVLFFGTGFLGAFTTFSTFAY), and 99 to 119 (LVYFFANLFFGFFAAFFGMVL). Gly75 and Thr78 together coordinate Na(+).

Belongs to the fluoride channel Fluc/FEX (TC 1.A.43) family.

The protein localises to the cell inner membrane. It catalyses the reaction fluoride(in) = fluoride(out). Na(+) is not transported, but it plays an essential structural role and its presence is essential for fluoride channel function. Its function is as follows. Fluoride-specific ion channel. Important for reducing fluoride concentration in the cell, thus reducing its toxicity. The sequence is that of Fluoride-specific ion channel FluC from Thermosipho melanesiensis (strain DSM 12029 / CIP 104789 / BI429).